Consider the following 333-residue polypeptide: DNA-directed RNA polymerase subunit alpha (333 aa).

Residues 1–234 (MQISVNEFLT…QQLAAFVDLK (234 aa)) form an alpha N-terminal domain (alpha-NTD) region. An alpha C-terminal domain (alpha-CTD) region spans residues 248–333 (IDPILLRPVD…SLKKDDKATA (86 aa)).

This sequence belongs to the RNA polymerase alpha chain family. In terms of assembly, homodimer. The RNAP catalytic core consists of 2 alpha, 1 beta, 1 beta' and 1 omega subunit. When a sigma factor is associated with the core the holoenzyme is formed, which can initiate transcription.

The catalysed reaction is RNA(n) + a ribonucleoside 5'-triphosphate = RNA(n+1) + diphosphate. DNA-dependent RNA polymerase catalyzes the transcription of DNA into RNA using the four ribonucleoside triphosphates as substrates. The sequence is that of DNA-directed RNA polymerase subunit alpha from Ectopseudomonas mendocina (strain ymp) (Pseudomonas mendocina).